The sequence spans 218 residues: Cytochrome c biogenesis ATP-binding export protein CcmA (218 aa).

Residues 2–217 (LEAKNLTCIR…KSCLSACCAV (216 aa)) form the ABC transporter domain. Residue 34–41 (GPNGAGKT) coordinates ATP.

This sequence belongs to the ABC transporter superfamily. CcmA exporter (TC 3.A.1.107) family. In terms of assembly, the complex is composed of two ATP-binding proteins (CcmA) and two transmembrane proteins (CcmB).

The protein localises to the cell inner membrane. It catalyses the reaction heme b(in) + ATP + H2O = heme b(out) + ADP + phosphate + H(+). Its function is as follows. Part of the ABC transporter complex CcmAB involved in the biogenesis of c-type cytochromes; once thought to export heme, this seems not to be the case, but its exact role is uncertain. Responsible for energy coupling to the transport system. In Yersinia pseudotuberculosis serotype I (strain IP32953), this protein is Cytochrome c biogenesis ATP-binding export protein CcmA.